The primary structure comprises 183 residues: Adenine phosphoribosyltransferase 3 (183 aa).

Belongs to the purine/pyrimidine phosphoribosyltransferase family. In terms of assembly, homodimer.

The protein resides in the cytoplasm. The enzyme catalyses AMP + diphosphate = 5-phospho-alpha-D-ribose 1-diphosphate + adenine. It participates in purine metabolism; AMP biosynthesis via salvage pathway; AMP from adenine: step 1/1. Catalyzes a salvage reaction resulting in the formation of AMP, that is energically less costly than de novo synthesis. May contribute to the recycling of adenine into adenylate nucleotides and the inactivation of cytokinins by phosphoribosylation. Possesses low activity toward adenine and cytokinins. The chain is Adenine phosphoribosyltransferase 3 (APT3) from Arabidopsis thaliana (Mouse-ear cress).